Here is a 404-residue protein sequence, read N- to C-terminus: Biflaviolin synthase CYP158A2 (404 aa).

The flaviolin site is built by R288 and L293. C353 is a heme binding site.

This sequence belongs to the cytochrome P450 family. It depends on heme as a cofactor.

The enzyme catalyses 2 flaviolin + 2 reduced [2Fe-2S]-[ferredoxin] + O2 + H(+) = 3,3'-biflaviolin + 2 oxidized [2Fe-2S]-[ferredoxin] + 2 H2O. The catalysed reaction is 2 flaviolin + 2 reduced [2Fe-2S]-[ferredoxin] + O2 + H(+) = 3,8'-biflaviolin + 2 oxidized [2Fe-2S]-[ferredoxin] + 2 H2O. It participates in pigment biosynthesis. Functionally, catalyzes oxidative C-C coupling reaction to polymerize flaviolin and form highly conjugated pigments which protect the soil bacterium from deleterious effects of UV irradiation (three isomers of biflaviolin and one triflaviolin). The protein is Biflaviolin synthase CYP158A2 of Streptomyces coelicolor (strain ATCC BAA-471 / A3(2) / M145).